A 207-amino-acid chain; its full sequence is Transcription factor DYT1 (207 aa).

Residues 1–38 (MGGGSRFQEPVRMSRRKQVTKEKEEDENFKSPNLEAER) are disordered. A bHLH domain is found at 28 to 77 (NFKSPNLEAERRRREKLHCRLMALRSHVPIVTNMTKASIVEDAITYIGEL).

In terms of assembly, homodimer. Mostly expressed in anthers, and, to a lower extent, in young inflorescences undergoing meiosis and siliques.

The protein resides in the nucleus. Its function is as follows. Transcription factor. Involved in the control of tapetum development. Required for male fertility and pollen differentiation, especially during callose deposition. The chain is Transcription factor DYT1 from Arabidopsis thaliana (Mouse-ear cress).